The sequence spans 225 residues: MEYQGQQHGRVDEYGNPVAGHGVGTGMGTHGGVGTGAAAGGHYQPMRDEHQTGRGILHRSGSSSSSSSEDDGMGGRRKKGIKEKIKEKLPGGHGDQQHNAGTYGYGQQGTGMAGTGGTYGQQGHTGMTGMGATDGTYGQQGHTGMAGTGAHGTAATGGTYGQQGHTGMTGTGMHGTGGTYGQQGHTGMTGTGMHGTGGTYGQHGTDTGEKKGIMDKIKEKLPGQH.

Residues 1 to 78 (MEYQGQQHGR…EDDGMGGRRK (78 aa)) form a disordered region. The segment covering 21 to 39 (HGVGTGMGTHGGVGTGAAA) has biased composition (gly residues). 5 repeat units span residues 105–118 (YGQQGTGMAGTGGT), 119–136 (YGQQGHTGMTGMGATDGT), 137–159 (YGQQGHTGMAGTGAHGTAATGGT), 160–178 (YGQQGHTGMTGTGMHGTGG), and 179–199 (TYGQQGHTGMTGTGMHGTGGT). The interval 105 to 199 (YGQQGTGMAG…GTGMHGTGGT (95 aa)) is 5 X approximate tandem repeats.

Belongs to the plant dehydrin family.

This Hordeum vulgare (Barley) protein is Dehydrin DHN4 (DHN4).